A 123-amino-acid polypeptide reads, in one-letter code: Hydrogenase maturation factor HypA (123 aa).

His-2 is a Ni(2+) binding site. Residues Cys-77, Cys-80, Cys-96, and Cys-99 each coordinate Zn(2+).

Belongs to the HypA/HybF family.

Its function is as follows. Involved in the maturation of [NiFe] hydrogenases. Required for nickel insertion into the metal center of the hydrogenase. The protein is Hydrogenase maturation factor HypA of Methanococcus aeolicus (strain ATCC BAA-1280 / DSM 17508 / OCM 812 / Nankai-3).